The chain runs to 332 residues: Ribose-phosphate pyrophosphokinase (332 aa).

ATP contacts are provided by residues 43–45 (DGE) and 102–103 (RQ). Mg(2+) contacts are provided by His-136 and Asp-176. The active site involves Lys-199. D-ribose 5-phosphate is bound by residues Arg-201, Asp-225, and 229–233 (DTGGT).

Belongs to the ribose-phosphate pyrophosphokinase family. Class I subfamily. As to quaternary structure, homohexamer. The cofactor is Mg(2+).

The protein localises to the cytoplasm. It catalyses the reaction D-ribose 5-phosphate + ATP = 5-phospho-alpha-D-ribose 1-diphosphate + AMP + H(+). Its pathway is metabolic intermediate biosynthesis; 5-phospho-alpha-D-ribose 1-diphosphate biosynthesis; 5-phospho-alpha-D-ribose 1-diphosphate from D-ribose 5-phosphate (route I): step 1/1. Involved in the biosynthesis of the central metabolite phospho-alpha-D-ribosyl-1-pyrophosphate (PRPP) via the transfer of pyrophosphoryl group from ATP to 1-hydroxyl of ribose-5-phosphate (Rib-5-P). This is Ribose-phosphate pyrophosphokinase from Mycoplasma genitalium (strain ATCC 33530 / DSM 19775 / NCTC 10195 / G37) (Mycoplasmoides genitalium).